The primary structure comprises 294 residues: Ribosomal protein L11 methyltransferase (294 aa).

The S-adenosyl-L-methionine site is built by Thr144, Gly165, Asp187, and Asn229.

This sequence belongs to the methyltransferase superfamily. PrmA family.

The protein localises to the cytoplasm. It carries out the reaction L-lysyl-[protein] + 3 S-adenosyl-L-methionine = N(6),N(6),N(6)-trimethyl-L-lysyl-[protein] + 3 S-adenosyl-L-homocysteine + 3 H(+). Its function is as follows. Methylates ribosomal protein L11. The polypeptide is Ribosomal protein L11 methyltransferase (Cellvibrio japonicus (strain Ueda107) (Pseudomonas fluorescens subsp. cellulosa)).